A 235-amino-acid chain; its full sequence is Regulator of G-protein signaling 18 (235 aa).

Phosphoserine is present on Ser-49. Positions 86 to 202 constitute an RGS domain; sequence SFDKLLSHRD…LKSDIYLDLM (117 aa). Phosphoserine occurs at positions 216 and 218.

Expressed in peripheral leukocytes, bone marrow, platelet, spleen and fetal liver.

Its subcellular location is the cytoplasm. In terms of biological role, inhibits signal transduction by increasing the GTPase activity of G protein alpha subunits thereby driving them into their inactive GDP-bound form. Binds to G(i) alpha-1, G(i) alpha-2, G(i) alpha-3 and G(q) alpha. In Homo sapiens (Human), this protein is Regulator of G-protein signaling 18 (RGS18).